Reading from the N-terminus, the 254-residue chain is MPRYRGPFRKRGPLPFRYVMLLSVVFFILSTTVSLWMINGSIKPVLMDIGEMETKRIATEVIQDSIEDYMSDSENMKDMFQMNSDENGNLTTIDFNTQVVNSVKTKVTKQLQAHLKEMETHTGHSGASENIMINIPLGQVTGNSLLGNLGPKIPVRFNLIGDAFTDVKTKIKPYGINNALIDISIFVEIKVKVIIPFASKTAVVTNNVPVSIKAVQGEVPQFYNGSGGSGVTPSVQLPSSKENGADSKKEKSSK.

A helical transmembrane segment spans residues 18–38; that stretch reads YVMLLSVVFFILSTTVSLWMI. The interval 226–254 is disordered; that stretch reads SGGSGVTPSVQLPSSKENGADSKKEKSSK. Polar residues predominate over residues 231–242; that stretch reads VTPSVQLPSSKE. The segment covering 243–254 has biased composition (basic and acidic residues); sequence NGADSKKEKSSK.

Its subcellular location is the cell membrane. Its function is as follows. Required for sporulation. The chain is Sporulation protein YunB (yunB) from Bacillus subtilis (strain 168).